The chain runs to 224 residues: MSRSIAQMIDHTLLKPNTTEDQIVKLCEEAKEYSFASVCVNPTWVALAAQLLKDAPDVKVCTVIGFPLGATTPEVKAFETTNAIENGATEVDMVINIGALKDKQYELVGRDIQAVVKAAEGKALTKVIIETSLLTEEEKKAACELAVKAGADFVKTSTGFSGGGATAEDIALMRKVVGPNLGVKASGGVRDLSDAKAMIDAGATRIGASAGVAIVNGERSEGSY.

The active-site Proton donor/acceptor is the Asp92. Residue Lys155 is the Schiff-base intermediate with acetaldehyde of the active site. Residue Lys184 is the Proton donor/acceptor of the active site.

The protein belongs to the DeoC/FbaB aldolase family. DeoC type 1 subfamily.

It localises to the cytoplasm. It catalyses the reaction 2-deoxy-D-ribose 5-phosphate = D-glyceraldehyde 3-phosphate + acetaldehyde. The protein operates within carbohydrate degradation; 2-deoxy-D-ribose 1-phosphate degradation; D-glyceraldehyde 3-phosphate and acetaldehyde from 2-deoxy-alpha-D-ribose 1-phosphate: step 2/2. In terms of biological role, catalyzes a reversible aldol reaction between acetaldehyde and D-glyceraldehyde 3-phosphate to generate 2-deoxy-D-ribose 5-phosphate. The protein is Deoxyribose-phosphate aldolase of Halalkalibacterium halodurans (strain ATCC BAA-125 / DSM 18197 / FERM 7344 / JCM 9153 / C-125) (Bacillus halodurans).